A 273-amino-acid chain; its full sequence is Phosphate import ATP-binding protein PstB (273 aa).

The ABC transporter domain occupies Leu17–Pro259. Gly49 to Ser56 contacts ATP.

The protein belongs to the ABC transporter superfamily. Phosphate importer (TC 3.A.1.7) family. The complex is composed of two ATP-binding proteins (PstB), two transmembrane proteins (PstC and PstA) and a solute-binding protein (PstS).

Its subcellular location is the cell inner membrane. It catalyses the reaction phosphate(out) + ATP + H2O = ADP + 2 phosphate(in) + H(+). Its function is as follows. Part of the ABC transporter complex PstSACB involved in phosphate import. Responsible for energy coupling to the transport system. This Trichodesmium erythraeum (strain IMS101) protein is Phosphate import ATP-binding protein PstB.